The sequence spans 140 residues: Nucleoside diphosphate kinase (140 aa).

Residues Lys-11, Phe-59, Arg-87, Thr-93, Arg-104, and Asn-114 each coordinate ATP. The active-site Pros-phosphohistidine intermediate is His-117.

The protein belongs to the NDK family. In terms of assembly, homotetramer. Mg(2+) serves as cofactor.

The protein resides in the cytoplasm. It carries out the reaction a 2'-deoxyribonucleoside 5'-diphosphate + ATP = a 2'-deoxyribonucleoside 5'-triphosphate + ADP. The catalysed reaction is a ribonucleoside 5'-diphosphate + ATP = a ribonucleoside 5'-triphosphate + ADP. Its function is as follows. Major role in the synthesis of nucleoside triphosphates other than ATP. The ATP gamma phosphate is transferred to the NDP beta phosphate via a ping-pong mechanism, using a phosphorylated active-site intermediate. The polypeptide is Nucleoside diphosphate kinase (Gluconacetobacter diazotrophicus (strain ATCC 49037 / DSM 5601 / CCUG 37298 / CIP 103539 / LMG 7603 / PAl5)).